A 166-amino-acid polypeptide reads, in one-letter code: Transcription antitermination protein NusB (166 aa).

Belongs to the NusB family.

Functionally, involved in transcription antitermination. Required for transcription of ribosomal RNA (rRNA) genes. Binds specifically to the boxA antiterminator sequence of the ribosomal RNA (rrn) operons. This chain is Transcription antitermination protein NusB, found in Chromohalobacter salexigens (strain ATCC BAA-138 / DSM 3043 / CIP 106854 / NCIMB 13768 / 1H11).